Reading from the N-terminus, the 644-residue chain is MEETMKLATMEDTVEYCLFLIPDESRDSDKHKEILQKYIERIITRFAPMLVPYIWQNQPFNLKYKPGKGGVPAHMFGVTKFGDNIEDEWFIVYVIKQITKEFPELVARIEDNDGEFLLIEAADFLPKWLDPENSTNRVFFCHGELCIIPAPRKSGAESWLPTTPPTIPQALNIITAHSEKILASESIRAAVNRRIRGYPEKIQASLHRAHCFLPAGIVAVLKQRPRLVAAAVQAFYLRDPIDLRACRVFKTFLPETRIMTSVTFTKCLYAQLVQQRFVPDRRSGYRLPPPSDPQYRAHELGMKLAHGFEILCSKCSPHFSDCKKSLVTASPLWASFLESLKKNDYFKGLIEGSAQYRERLEMAENYFQLSVDWPESSLAMSPGEEILTLLQTIPFDIEDLKKEAANLPPEDDDQWLDLSPDQLDQLLQEAVGKKESESVSKEEKEQNYDLTEVSESMKAFISKVSTHKGAELPREPSEAPITFDADSFLNYFDKILGPRPNESDSDDLDDEDFECLDSDDDLDFETHEPGEEASLKGTLDNLKSYMAQMDQELAHTCISKSFTTRNQVEPVSQTTDNNSDEEDSGTGESVMAPVDVDLNLVSNILESYSSQAGLAGPASNLLQSMGVQLPDNTDHRPTSKPTKN.

Disordered stretches follow at residues 430 to 449 (AVGKKESESVSKEEKEQNYD), 496 to 537 (LGPR…SLKG), 567 to 589 (QVEPVSQTTDNNSDEEDSGTGES), and 623 to 644 (QSMGVQLPDNTDHRPTSKPTKN). The span at 431–447 (VGKKESESVSKEEKEQN) shows a compositional bias: basic and acidic residues. Positions 439-644 (VSKEEKEQNY…HRPTSKPTKN (206 aa)) are transcription activation. The involved in nuclear export stretch occupies residues 481-497 (ITFDADSFLNYFDKILG). The tract at residues 502-532 (ESDSDDLDDEDFECLDSDDDLDFETHEPGEE) is acidic region required for transactivation activity. Residues Ser503, Ser505, and Ser518 each carry the phosphoserine modification. The span at 503 to 523 (SDSDDLDDEDFECLDSDDDLD) shows a compositional bias: acidic residues. Positions 524–534 (FETHEPGEEAS) are enriched in basic and acidic residues. Positions 567 to 577 (QVEPVSQTTDN) are enriched in polar residues.

This sequence belongs to the ECD family. Interacts with TP53, MDM2, TXNIP. Interacts (phosphorylated) with PIH1D1. Interacts with RUVBL1 mediating the PIH1D1-independent association with the R2TP complex. Interacts with RB1, RBL1 and RBL2; ECD competes with E2F1 for binding to hypophospshorylated RB1. Interacts with EP300. Interacts with DDX39A. Phosphorylated predominantly by CK2 on two serine-containing clusters; involved in cell cycle regulation activity. In terms of tissue distribution, highly expressed in muscle and heart. Over-expressed in pancreatic and breast cancers.

It is found in the cytoplasm. Its subcellular location is the nucleus. Its function is as follows. Regulator of p53/TP53 stability and function. Inhibits MDM2-mediated degradation of p53/TP53 possibly by cooperating in part with TXNIP. May be involved transcriptional regulation. In vitro has intrinsic transactivation activity enhanced by EP300. May be a transcriptional activator required for the expression of glycolytic genes. Involved in regulation of cell cycle progression. Proposed to disrupt Rb-E2F binding leading to transcriptional activation of E2F proteins. The cell cycle -regulating function may depend on its RUVBL1-mediated association with the R2TP complex. May play a role in regulation of pre-mRNA splicing. Participates together with DDX39A in mRNA nuclear export. In Homo sapiens (Human), this protein is Protein ecdysoneless homolog (ECD).